Consider the following 470-residue polypeptide: Probable citrate synthase, mitochondrial (470 aa).

Catalysis depends on residues His-297, His-351, and Asp-406.

Belongs to the citrate synthase family. As to quaternary structure, homodimer.

It is found in the mitochondrion matrix. It catalyses the reaction oxaloacetate + acetyl-CoA + H2O = citrate + CoA + H(+). The protein operates within carbohydrate metabolism; tricarboxylic acid cycle; isocitrate from oxaloacetate: step 1/2. The polypeptide is Probable citrate synthase, mitochondrial (Leishmania infantum).